Reading from the N-terminus, the 744-residue chain is Catalase-peroxidase (744 aa).

Positions 1-21 are disordered; that stretch reads MANESKCPFHQTAGGGTSNRD. Positions 91-241 form a cross-link, tryptophyl-tyrosyl-methioninium (Trp-Tyr) (with M-267); the sequence is WHSAGTYRIG…LAAVQMGLIY (151 aa). His-92 (proton acceptor) is an active-site residue. A cross-link (tryptophyl-tyrosyl-methioninium (Tyr-Met) (with W-91)) is located at residues 241-267; it reads YVNPEGPEGNPDPVASGKDIRDTFGRM. Residue His-282 participates in heme b binding. Residues 361–387 are disordered; that stretch reads GAHQWRPKDGKGANTVPDAHDTTKRHA.

Belongs to the peroxidase family. Peroxidase/catalase subfamily. Homodimer or homotetramer. Heme b serves as cofactor. Post-translationally, formation of the three residue Trp-Tyr-Met cross-link is important for the catalase, but not the peroxidase activity of the enzyme.

The enzyme catalyses H2O2 + AH2 = A + 2 H2O. It catalyses the reaction 2 H2O2 = O2 + 2 H2O. Functionally, bifunctional enzyme with both catalase and broad-spectrum peroxidase activity. In Pseudomonas entomophila (strain L48), this protein is Catalase-peroxidase.